The following is a 577-amino-acid chain: Sensor protein ChvG (577 aa).

Over 1 to 29 (MRGQRRWAHPFTLIRRLFGNAVFSSLTRR) the chain is Cytoplasmic. Residues 30–50 (IVFFNLVALVVLVGGIMYLNQ) form a helical membrane-spanning segment. Topologically, residues 51–260 (FREGLIDARV…DIDKIVHAER (210 aa)) are periplasmic. A helical membrane pass occupies residues 261-281 (LAIIRVFGVAALVNVILSLLL). Over 282–577 (SSTIANPLRR…VLSLPAGPHP (296 aa)) the chain is Cytoplasmic. Residues 283–339 (STIANPLRRLSAAAIRVRRGGAKEREEIPDFSSRQDEIGNLSVALREMTTALYDRIA) enclose the HAMP domain. In terms of domain architecture, Histidine kinase spans 347–575 (DVSHELKNPL…RFVLSLPAGP (229 aa)). His350 carries the post-translational modification Phosphohistidine.

Homodimer.

Its subcellular location is the cell inner membrane. It catalyses the reaction ATP + protein L-histidine = ADP + protein N-phospho-L-histidine.. Its pathway is glycan metabolism; exopolysaccharide biosynthesis. In terms of biological role, member of a two-component regulatory system ChvG(ExoS)/ChvI involved in regulating the production of succinoglycan. Activates ChvI by phosphorylation. The polypeptide is Sensor protein ChvG (chvG) (Rhizobium meliloti (strain 1021) (Ensifer meliloti)).